The following is a 1281-amino-acid chain: Protein ETHYLENE-INSENSITIVE 2 (1281 aa).

Residues M1–G21 are Cytoplasmic-facing. Residues G22 to I42 traverse the membrane as a helical segment. Over D43 to L61 the chain is Extracellular. The helical transmembrane segment at V62–I82 threads the bilayer. The Cytoplasmic portion of the chain corresponds to G83 to L112. The chain crosses the membrane as a helical span at residues S113–F133. The Extracellular segment spans residues E134–D137. A helical transmembrane segment spans residues L138–H158. The Cytoplasmic portion of the chain corresponds to L159–M163. A helical transmembrane segment spans residues V164 to L184. The Extracellular portion of the chain corresponds to V185 to S208. Residues L209–V229 traverse the membrane as a helical segment. Topologically, residues Q230–A238 are cytoplasmic. The chain crosses the membrane as a helical span at residues V239 to L259. The Extracellular portion of the chain corresponds to V260–P297. A helical membrane pass occupies residues T298–G318. Topologically, residues S319 to H325 are cytoplasmic. Residues L326 to V346 form a helical membrane-spanning segment. Residues P347–Q362 lie on the Extracellular side of the membrane. A helical transmembrane segment spans residues L363–F383. Topologically, residues R384–H400 are cytoplasmic. Residues L401–A421 traverse the membrane as a helical segment. Residues E422–T447 lie on the Extracellular side of the membrane. Residues V448 to L468 traverse the membrane as a helical segment. The Cytoplasmic portion of the chain corresponds to K469–Q1281. 2 disordered regions span residues I540–F565 and E593–G665. Over residues H548 to P557 the composition is skewed to polar residues. Residues V599–E610 are compositionally biased toward basic and acidic residues.

The protein belongs to the NRAMP (TC 2.A.55) family. In terms of tissue distribution, expressed in roots, leaf sheaths, leaf blades, flowers, developing seeds, germinating seeds and young seedlings. Expressed in adventitious roots, vascular tissues of the seminal roots, lateral roots, the connecting region between vascular tissues and lateral roots, mature leaf, mature stem, tips of adventitious roots derived from the node, shoot apex, young panicle, anthers, pistil, stigma, ovary, seed coat and fruit coat pericarp.

The protein localises to the membrane. Central factor in ethylene signaling pathways that control development, senescence and grain size. Acts as a positive component of the ethylene-signaling pathway. This chain is Protein ETHYLENE-INSENSITIVE 2, found in Oryza sativa subsp. japonica (Rice).